A 143-amino-acid chain; its full sequence is Small ribosomal subunit protein uS9 (143 aa).

The interval 124–143 is disordered; sequence PEPKKFGGKGARARFQKSYR. Residues 134–143 show a composition bias toward basic residues; that stretch reads ARARFQKSYR.

It belongs to the universal ribosomal protein uS9 family.

The sequence is that of Small ribosomal subunit protein uS9 (RPS16) from Candida glabrata (strain ATCC 2001 / BCRC 20586 / JCM 3761 / NBRC 0622 / NRRL Y-65 / CBS 138) (Yeast).